The following is a 648-amino-acid chain: Macrolide export ATP-binding/permease protein MacB (648 aa).

The ABC transporter domain occupies 5–243 (LELKDIRRSY…AGGTEPVVNT (239 aa)). 41–48 (GASGSGKS) contributes to the ATP binding site. Transmembrane regions (helical) follow at residues 273 to 293 (LLTM…VVVG), 523 to 543 (LFLT…VMNI), 576 to 596 (AVLV…LIAF), and 600 to 620 (LFLP…AFLC).

This sequence belongs to the ABC transporter superfamily. Macrolide exporter (TC 3.A.1.122) family. Homodimer. Part of the tripartite efflux system MacAB-TolC, which is composed of an inner membrane transporter, MacB, a periplasmic membrane fusion protein, MacA, and an outer membrane component, TolC. The complex forms a large protein conduit and can translocate molecules across both the inner and outer membranes. Interacts with MacA.

The protein resides in the cell inner membrane. Part of the tripartite efflux system MacAB-TolC. MacB is a non-canonical ABC transporter that contains transmembrane domains (TMD), which form a pore in the inner membrane, and an ATP-binding domain (NBD), which is responsible for energy generation. Confers resistance against macrolides. The protein is Macrolide export ATP-binding/permease protein MacB of Shigella sonnei (strain Ss046).